The chain runs to 242 residues: UPF0273 protein MJ1359 (242 aa).

The KaiC domain occupies Lys2–Arg242. An ATP-binding site is contributed by Gly29–Ser36.

It belongs to the UPF0273 family.

The chain is UPF0273 protein MJ1359 from Methanocaldococcus jannaschii (strain ATCC 43067 / DSM 2661 / JAL-1 / JCM 10045 / NBRC 100440) (Methanococcus jannaschii).